A 497-amino-acid chain; its full sequence is PHD finger protein 10 (497 aa).

Low complexity predominate over residues 1–13; it reads MTAAGPGAAPSPG. Positions 1–61 are disordered; it reads MTAAGPGAAP…SSRSCETSSQ (61 aa). A phosphoserine mark is found at serine 11, serine 35, and serine 49. The segment at 88–184 is essential to induce neural progenitor proliferation; the sequence is MLQEQVSEYL…HYKEYSQMQQ (97 aa). The tract at residues 88–294 is SAY; sequence MLQEQVSEYL…PPLDPELPAL (207 aa). Lysine 240 is covalently cross-linked (Glycyl lysine isopeptide (Lys-Gly) (interchain with G-Cter in SUMO2)). Serine 269 carries the post-translational modification Phosphoserine. Positions 284 to 295 are enriched in low complexity; the sequence is EPPLDPELPALD. Residues 284–368 form a disordered region; the sequence is EPPLDPELPA…RSVLSKSAPG (85 aa). Residues 291–333 form an essential to induce neural progenitor proliferation region; sequence LPALDSDGDSDDGEDGGGDEKRKNKGTSDSSSGNVSEGDSPPD. Residues serine 296, serine 300, serine 326, and serine 330 each carry the phosphoserine modification. Residues 296 to 307 show a composition bias toward acidic residues; sequence SDGDSDDGEDGG. Polar residues predominate over residues 317–327; it reads TSDSSSGNVSE. Residues 337–358 show a composition bias toward basic and acidic residues; sequence DTFHGRQKSKDKMATPRKDGSK. The PHD-type 1; degenerate zinc-finger motif lies at 378–435; the sequence is LCGICLKGKESNKKGKAESLIHCSQCDNSGHPSCLDMTMELVSMIKTYPWQCMECKTC. A Glycyl lysine isopeptide (Lys-Gly) (interchain with G-Cter in SUMO2) cross-link involves residue lysine 384. The PHD-type 2; degenerate zinc-finger motif lies at 437–480; it reads ICGQPHHEEEMMFCDVCDRGYHTFCVGLGAIPSGRWICDCCQRA.

Belongs to the SAYP family. In terms of assembly, component of neural progenitors-specific chromatin remodeling complex (npBAF complex) composed of at least, ARID1A/BAF250A or ARID1B/BAF250B, SMARCD1/BAF60A, SMARCD3/BAF60C, SMARCA2/BRM/BAF190B, SMARCA4/BRG1/BAF190A, SMARCB1/BAF47, SMARCC1/BAF155, SMARCE1/BAF57, SMARCC2/BAF170, PHF10/BAF45A, ACTL6A/BAF53A and actin. Interacts with ACTL6A/BAF53A, SMARCA2/BRM/BAF190B, SMARCA4/BRG1/BAF190A and PBRM1/BAF180. As to expression, widely expressed. Expressed selectively in neural stem and progenitor cells (at protein level).

Its subcellular location is the nucleus. Involved in transcription activity regulation by chromatin remodeling. Belongs to the neural progenitors-specific chromatin remodeling complex (npBAF complex) and is required for the proliferation of neural progenitors. During neural development a switch from a stem/progenitor to a post-mitotic chromatin remodeling mechanism occurs as neurons exit the cell cycle and become committed to their adult state. The transition from proliferating neural stem/progenitor cells to post-mitotic neurons requires a switch in subunit composition of the npBAF and nBAF complexes. As neural progenitors exit mitosis and differentiate into neurons, npBAF complexes which contain ACTL6A/BAF53A and PHF10/BAF45A, are exchanged for homologous alternative ACTL6B/BAF53B and DPF1/BAF45B or DPF3/BAF45C subunits in neuron-specific complexes (nBAF). The npBAF complex is essential for the self-renewal/proliferative capacity of the multipotent neural stem cells. The nBAF complex along with CREST plays a role regulating the activity of genes essential for dendrite growth. This chain is PHD finger protein 10 (Phf10), found in Mus musculus (Mouse).